We begin with the raw amino-acid sequence, 157 residues long: ABA-responsive protein ABR17 (157 aa).

Belongs to the BetVI family.

This chain is ABA-responsive protein ABR17, found in Pisum sativum (Garden pea).